Consider the following 303-residue polypeptide: Probable 5-dehydro-4-deoxyglucarate dehydratase (303 aa).

This sequence belongs to the DapA family.

It carries out the reaction 5-dehydro-4-deoxy-D-glucarate + H(+) = 2,5-dioxopentanoate + CO2 + H2O. It functions in the pathway carbohydrate acid metabolism; D-glucarate degradation; 2,5-dioxopentanoate from D-glucarate: step 2/2. The polypeptide is Probable 5-dehydro-4-deoxyglucarate dehydratase (Acinetobacter baumannii (strain ATCC 17978 / DSM 105126 / CIP 53.77 / LMG 1025 / NCDC KC755 / 5377)).